A 337-amino-acid polypeptide reads, in one-letter code: Phenylalanine--tRNA ligase alpha subunit (337 aa).

Position 252 (E252) interacts with Mg(2+).

Belongs to the class-II aminoacyl-tRNA synthetase family. Phe-tRNA synthetase alpha subunit type 1 subfamily. Tetramer of two alpha and two beta subunits. The cofactor is Mg(2+).

It is found in the cytoplasm. The enzyme catalyses tRNA(Phe) + L-phenylalanine + ATP = L-phenylalanyl-tRNA(Phe) + AMP + diphosphate + H(+). The protein is Phenylalanine--tRNA ligase alpha subunit of Francisella tularensis subsp. tularensis (strain SCHU S4 / Schu 4).